Consider the following 1168-residue polypeptide: Transcription-repair-coupling factor (1168 aa).

In terms of domain architecture, Helicase ATP-binding spans 633–794; it reads DMQKSRPMDR…MLGVRDLSVI (162 aa). 646 to 653 is an ATP binding site; sequence GDVGYGKT. Residues 747-750 carry the DEEQ box motif; sequence DEEQ. Positions 808-969 constitute a Helicase C-terminal domain; that stretch reads VLEQNMSFIK…GFKIAMRDLN (162 aa).

This sequence in the N-terminal section; belongs to the UvrB family. The protein in the C-terminal section; belongs to the helicase family. RecG subfamily.

It localises to the cytoplasm. In terms of biological role, couples transcription and DNA repair by recognizing RNA polymerase (RNAP) stalled at DNA lesions. Mediates ATP-dependent release of RNAP and its truncated transcript from the DNA, and recruitment of nucleotide excision repair machinery to the damaged site. The protein is Transcription-repair-coupling factor of Staphylococcus aureus (strain bovine RF122 / ET3-1).